A 122-amino-acid chain; its full sequence is UPF0102 protein CLH_1204 (122 aa).

It belongs to the UPF0102 family.

This is UPF0102 protein CLH_1204 from Clostridium botulinum (strain Alaska E43 / Type E3).